A 115-amino-acid chain; its full sequence is UPF0145 protein lp_2083 (115 aa).

It belongs to the UPF0145 family.

In Lactiplantibacillus plantarum (strain ATCC BAA-793 / NCIMB 8826 / WCFS1) (Lactobacillus plantarum), this protein is UPF0145 protein lp_2083.